Consider the following 425-residue polypeptide: Terminal nucleotidyltransferase 5B (425 aa).

Residues 1-42 are disordered; sequence MMPSESGAERRDRAAAQVGTAAATAVATAAPAGGGPDPEALS. A compositionally biased stretch (low complexity) spans 15–31; sequence AAQVGTAAATAVATAAP.

It belongs to the TENT family.

It is found in the cytoplasm. It localises to the nucleus. It carries out the reaction RNA(n) + ATP = RNA(n)-3'-adenine ribonucleotide + diphosphate. Functionally, catalyzes the transfer of one adenosine molecule from an ATP to an mRNA poly(A) tail bearing a 3'-OH terminal group in an ATP hydrolysis-dependent manner. May be involved in maintaining the translation efficiency of at least some genes through preventing degradation of their mRNAs. Prefers RNA molecules that are adenosine-rich close to 3'-end. In addition, may inhibit cell proliferation and cell cycle progression through ubiquitination of beta-catenin/CTNNB1. In Homo sapiens (Human), this protein is Terminal nucleotidyltransferase 5B.